The primary structure comprises 439 residues: Chitinase-like protein Idgf1 (439 aa).

The first 20 residues, 1 to 20 (MRFQLFYILGLLSVTSLTHA), serve as a signal peptide directing secretion. The GH18 domain maps to 22-439 (SNLICYYDSN…ILRSIKYFMG (418 aa)). C26 and C53 are oxidised to a cystine. 3 N-linked (GlcNAc...) asparagine glycosylation sites follow: N122, N218, and N346. A disulfide bond links C340 and C423.

It belongs to the glycosyl hydrolase 18 family. IDGF subfamily. In terms of tissue distribution, primarily expressed in yolk cells and fat body. In larvae, it is expressed in large salivary gland cells and weakly expressed in imaginal disks. Less expressed than Idgf2 and Idgf4.

It localises to the secreted. Cooperates with insulin-like peptides to stimulate the proliferation, polarization and motility of imaginal disk cells. May act by stabilizing the binding of insulin-like peptides to its receptor through a simultaneous interaction with both molecules to form a multiprotein signaling complex. The sequence is that of Chitinase-like protein Idgf1 (Idgf1) from Drosophila melanogaster (Fruit fly).